Reading from the N-terminus, the 722-residue chain is Capsid protein VP1 (722 aa).

The phospholipase A2-like stretch occupies residues 14-59; that stretch reads YLGPGNSLDQGEPTNPSDAAAKEHDEAYAAYLRSGKNPYLYFSPAD. 3 disordered regions span residues 90 to 115, 136 to 179, and 497 to 531; these read VLTDTPDHPSTSRPTKPTKRSKPPPH, LAPM…VGIS, and AGRGGAQTDENQAADGDPRYAFGRQHGQKTTTTGE. Gly residues predominate over residues 161–178; it reads SGNGSGGGGGGGSGGVGI.

It belongs to the parvoviridae capsid protein family.

It is found in the virion. Capsid protein self-assembles to form an icosahedral capsid with a T=1 symmetry, about 22 nm in diameter, and consisting of 60 copies of two size variants of the capsid proteins, VP1 and VP2, which differ by the presence of an N-terminal extension in the minor protein VP1. The capsid encapsulates the genomic ssDNA. Capsid proteins are responsible for the attachment to host cell receptors. This attachment induces virion internalization predominantly through clathrin-dependent endocytosis. Binding to the host receptors also induces capsid rearrangements leading to surface exposure of VP1 N-terminus, specifically its phospholipase A2-like region and putative nuclear localization signal(s). VP1 N-terminus might serve as a lipolytic enzyme to breach the endosomal membrane during entry into host cell and might contribute to virus transport to the nucleus. The polypeptide is Capsid protein VP1 (Neovison vison (American mink)).